The chain runs to 261 residues: tRNA pseudouridine synthase A (261 aa).

The active-site Nucleophile is the Asp51. Substrate is bound at residue Tyr109.

Belongs to the tRNA pseudouridine synthase TruA family. As to quaternary structure, homodimer.

It carries out the reaction uridine(38/39/40) in tRNA = pseudouridine(38/39/40) in tRNA. In terms of biological role, formation of pseudouridine at positions 38, 39 and 40 in the anticodon stem and loop of transfer RNAs. The chain is tRNA pseudouridine synthase A from Shewanella sp. (strain W3-18-1).